Reading from the N-terminus, the 252-residue chain is 2-succinyl-6-hydroxy-2,4-cyclohexadiene-1-carboxylate synthase (252 aa).

It belongs to the AB hydrolase superfamily. MenH family. Monomer.

It carries out the reaction 5-enolpyruvoyl-6-hydroxy-2-succinyl-cyclohex-3-ene-1-carboxylate = (1R,6R)-6-hydroxy-2-succinyl-cyclohexa-2,4-diene-1-carboxylate + pyruvate. It participates in quinol/quinone metabolism; 1,4-dihydroxy-2-naphthoate biosynthesis; 1,4-dihydroxy-2-naphthoate from chorismate: step 3/7. Its pathway is quinol/quinone metabolism; menaquinone biosynthesis. Its function is as follows. Catalyzes a proton abstraction reaction that results in 2,5-elimination of pyruvate from 2-succinyl-5-enolpyruvyl-6-hydroxy-3-cyclohexene-1-carboxylate (SEPHCHC) and the formation of 2-succinyl-6-hydroxy-2,4-cyclohexadiene-1-carboxylate (SHCHC). In Salmonella heidelberg (strain SL476), this protein is 2-succinyl-6-hydroxy-2,4-cyclohexadiene-1-carboxylate synthase.